The chain runs to 166 residues: MPPKVDPSEKVEVFLRVCGGEAGAMSTLAPKLGPLGVSPKKVGDDIAKATQPWKGMKVSVKLTIQNRIAVPEVLPSASALVIKALKEPPRDRKKEKNIKHNGNIPLEEICKIAKTMRFKSLAVDFKGSVLEILGTAHSVGCKVNGKSPRDIQAGIQSGEIEVVEPK.

It belongs to the universal ribosomal protein uL11 family.

The chain is Large ribosomal subunit protein uL11 (rpl12) from Dictyostelium discoideum (Social amoeba).